We begin with the raw amino-acid sequence, 200 residues long: MLAFCRSSLKSKKYFIILLALAAIAGLGTHAAWSSNGLPRIDNKTLARLAQQHPVVVLFRHAERCDRSTNQCLSDKTGITVKGTQDARELGNAFSADIPDFDLYSSNTVRTIQSATWFSAGKKLTVDKRLLQCGNEIYSAIKDLQSKAPDKNIVIFTHNHCMTYIAKNKRDAIFKPDYLDGLVMHVEKGKVYLDGEFVNH.

Positions 1–25 (MLAFCRSSLKSKKYFIILLALAAIA) are cleaved as a signal peptide.

Belongs to the phosphoglycerate mutase family. Ais subfamily.

It localises to the periplasm. It participates in bacterial outer membrane biogenesis; lipopolysaccharide metabolism. Its function is as follows. Catalyzes the dephosphorylation of heptose(II) of the outer membrane lipopolysaccharide core. This is Lipopolysaccharide core heptose(II)-phosphate phosphatase from Shigella flexneri serotype 5b (strain 8401).